The primary structure comprises 182 residues: MRLNIPTCLTLFRLIIVPFFIIVFYLPFSNASFYSAIIFILAALTDWFDGFLARKLNQTTCFGAFLDPVADKIIVVIGLILIIEYFHSFWITIPSLIMIIREIIISSLREWMAEIGKNNLLSVSLISKLKTSIQMLAIFSLLWKETYIIIIIGILSLYVSSILAFLSMLKYFYIAWRDLFRN.

The Cytoplasmic portion of the chain corresponds to 1 to 12; the sequence is MRLNIPTCLTLF. The chain crosses the membrane as a helical span at residues 13-37; sequence RLIIVPFFIIVFYLPFSNASFYSAI. Residues 38-60 lie on the Periplasmic side of the membrane; that stretch reads IFILAALTDWFDGFLARKLNQTT. A helical transmembrane segment spans residues 61 to 81; the sequence is CFGAFLDPVADKIIVVIGLIL. At 82–86 the chain is on the cytoplasmic side; it reads IIEYF. The chain crosses the membrane as a helical span at residues 87–107; sequence HSFWITIPSLIMIIREIIISS. At 108 to 145 the chain is on the periplasmic side; sequence LREWMAEIGKNNLLSVSLISKLKTSIQMLAIFSLLWKE. The helical transmembrane segment at 146 to 168 threads the bilayer; sequence TYIIIIIGILSLYVSSILAFLSM. Topologically, residues 169–181 are cytoplasmic; it reads LKYFYIAWRDLFR.

This sequence belongs to the CDP-alcohol phosphatidyltransferase class-I family.

The protein localises to the cell inner membrane. The catalysed reaction is a CDP-1,2-diacyl-sn-glycerol + sn-glycerol 3-phosphate = a 1,2-diacyl-sn-glycero-3-phospho-(1'-sn-glycero-3'-phosphate) + CMP + H(+). Its pathway is phospholipid metabolism; phosphatidylglycerol biosynthesis; phosphatidylglycerol from CDP-diacylglycerol: step 1/2. Functionally, catalyzes the conversion of cytidine diphosphate diacylglycerol (CDP-DG) and glycerol 3-phosphate into phosphatidylglycerol. Essential for the synthesis of anionic phospholipids, thereby playing a role in balancing the ratio of zwitterionic and anionic phospholipids, which is thought to be important for normal membrane function. The protein is CDP-diacylglycerol--glycerol-3-phosphate 3-phosphatidyltransferase of Wigglesworthia glossinidia brevipalpis.